The primary structure comprises 252 residues: Pantothenate synthetase (252 aa).

ATP is bound at residue 29–36; that stretch reads MGNLHAGH. Residue histidine 36 is the Proton donor of the active site. Glutamine 60 lines the (R)-pantoate pocket. Glutamine 60 contributes to the beta-alanine binding site. 146–149 contacts ATP; the sequence is GEKD. Glutamine 152 is a binding site for (R)-pantoate. ATP contacts are provided by residues valine 175 and 183-186; that span reads CSSR.

This sequence belongs to the pantothenate synthetase family. As to quaternary structure, homodimer.

It is found in the cytoplasm. The catalysed reaction is (R)-pantoate + beta-alanine + ATP = (R)-pantothenate + AMP + diphosphate + H(+). Its pathway is cofactor biosynthesis; (R)-pantothenate biosynthesis; (R)-pantothenate from (R)-pantoate and beta-alanine: step 1/1. Catalyzes the condensation of pantoate with beta-alanine in an ATP-dependent reaction via a pantoyl-adenylate intermediate. This is Pantothenate synthetase from Legionella pneumophila subsp. pneumophila (strain Philadelphia 1 / ATCC 33152 / DSM 7513).